A 98-amino-acid polypeptide reads, in one-letter code: Small ribosomal subunit protein eS24 (98 aa).

The protein belongs to the eukaryotic ribosomal protein eS24 family.

This Thermococcus gammatolerans (strain DSM 15229 / JCM 11827 / EJ3) protein is Small ribosomal subunit protein eS24.